The sequence spans 381 residues: tRNA-cytidine(32) 2-sulfurtransferase (381 aa).

Positions 101–106 (SGGKDS) match the PP-loop motif motif. Positions 176, 179, and 267 each coordinate [4Fe-4S] cluster.

It belongs to the TtcA family. As to quaternary structure, homodimer. Mg(2+) is required as a cofactor. Requires [4Fe-4S] cluster as cofactor.

It is found in the cytoplasm. The enzyme catalyses cytidine(32) in tRNA + S-sulfanyl-L-cysteinyl-[cysteine desulfurase] + AH2 + ATP = 2-thiocytidine(32) in tRNA + L-cysteinyl-[cysteine desulfurase] + A + AMP + diphosphate + H(+). It participates in tRNA modification. In terms of biological role, catalyzes the ATP-dependent 2-thiolation of cytidine in position 32 of tRNA, to form 2-thiocytidine (s(2)C32). The sulfur atoms are provided by the cysteine/cysteine desulfurase (IscS) system. In Psychrobacter arcticus (strain DSM 17307 / VKM B-2377 / 273-4), this protein is tRNA-cytidine(32) 2-sulfurtransferase.